Here is a 999-residue protein sequence, read N- to C-terminus: Multiple C2 and transmembrane domain-containing protein 1 (999 aa).

Residues 1–19 (MEPRAAAAGEPEPPAASSS) show a composition bias toward low complexity. The segment at 1-241 (MEPRAAAAGE…TGEEHGSSQK (241 aa)) is disordered. The span at 34 to 44 (RSKGGGGGRAG) shows a compositional bias: gly residues. Low complexity predominate over residues 65-79 (GNAPARGSGAGSRWS). Residues 92-101 (FSSSQPNLCC) show a composition bias toward polar residues. 2 stretches are compositionally biased toward low complexity: residues 131–141 (PAVKGPAAASG) and 149–169 (GGRS…LSSS). Composition is skewed to basic and acidic residues over residues 175–185 (RGDRARDEGAR) and 228–238 (RAPETGEEHGS). C2 domains follow at residues 242-360 (IINT…DVTL), 452-569 (QTQS…KLEL), and 603-724 (QKER…AYVL). Residues Asp-277, Asp-283, Asp-330, Asp-332, Asp-338, Asp-486, Asp-492, Asp-539, Asp-541, Asp-547, Asp-642, Asp-648, Asp-694, Asp-696, and Asp-702 each coordinate Ca(2+). The next 2 helical transmembrane spans lie at 811-831 (FVLF…LVLL) and 914-934 (PFLS…LYCI).

Belongs to the MCTP family. It depends on Ca(2+) as a cofactor.

Its subcellular location is the cytoplasmic vesicle. It is found in the secretory vesicle. The protein resides in the synaptic vesicle membrane. The protein localises to the recycling endosome. It localises to the endoplasmic reticulum membrane. In terms of biological role, calcium sensor which is essential for the stabilization of normal baseline neurotransmitter release and for the induction and long-term maintenance of presynaptic homeostatic plasticity. This chain is Multiple C2 and transmembrane domain-containing protein 1 (MCTP1), found in Homo sapiens (Human).